The primary structure comprises 84 residues: Putative membrane protein insertion efficiency factor (84 aa).

This sequence belongs to the UPF0161 family.

It is found in the cell inner membrane. In terms of biological role, could be involved in insertion of integral membrane proteins into the membrane. The polypeptide is Putative membrane protein insertion efficiency factor (Shewanella denitrificans (strain OS217 / ATCC BAA-1090 / DSM 15013)).